A 534-amino-acid polypeptide reads, in one-letter code: Protoheme IX farnesyltransferase (534 aa).

Positions 1–251 (MRREHARAIL…VLLEGKPSLL (251 aa)) are unknown. The next 15 helical transmembrane spans lie at 17–37 (PWLLIVLALIAYGAVLAGGIV), 39–59 (ALTGAAVSGIAMFTLGAALAI), 83–103 (YLTLAFAATGVLYLAVIFGAI), 128–148 (LALAHRGLAGGATLLIAALAV), 163–183 (VAWALGLMLIQNLVGLAQVLL), 197–217 (LMHLGLSATAWGALVVLTTLA), 261–281 (GVISLLILTTITSMYITPAGI), 284–304 (LSLVLWTTLGGWLMASGSHSI), 339–359 (IALGVVAFVILALFVNLLAAI), 360–380 (LALAGFLYYVFIYTIWLKRTS), 384–404 (IVIGGGAGAFPPLVGWAAVTG), 411–431 (LLLWLIVFFWTPPHFWALALI), 457–477 (IVIYTLSMLALTALPPVLGML), 479–499 (WAYLMSAAVSGGLFLHYALKL), and 508–528 (AWALYKYSLLYLAILFVAMAV). The protoheme IX prenyltransferase stretch occupies residues 252–530 (KDYISLTKPG…ILFVAMAVDR (279 aa)).

It in the C-terminal section; belongs to the UbiA prenyltransferase family. Protoheme IX farnesyltransferase subfamily.

Its subcellular location is the cell membrane. The enzyme catalyses heme b + (2E,6E)-farnesyl diphosphate + H2O = Fe(II)-heme o + diphosphate. The protein operates within porphyrin-containing compound metabolism; heme O biosynthesis; heme O from protoheme: step 1/1. In terms of biological role, converts heme B (protoheme IX) to heme O by substitution of the vinyl group on carbon 2 of heme B porphyrin ring with a hydroxyethyl farnesyl side group. The protein is Protoheme IX farnesyltransferase (ctaB) of Roseiflexus sp. (strain RS-1).